The following is a 173-amino-acid chain: Large ribosomal subunit protein bL9 (173 aa).

Belongs to the bacterial ribosomal protein bL9 family.

Binds to the 23S rRNA. This chain is Large ribosomal subunit protein bL9, found in Chlamydia felis (strain Fe/C-56) (Chlamydophila felis).